A 305-amino-acid chain; its full sequence is uncharacterized protein (305 aa).

The span at 1-10 (MLWAQRKKRK) shows a compositional bias: basic residues. Positions 1–30 (MLWAQRKKRKATTETTEDKPAESHRPNDSW) are disordered. Positions 16-27 (TEDKPAESHRPN) are enriched in basic and acidic residues. Position 39 is a phosphoserine (Ser-39). The span at 92-101 (QKISGTSVSK) shows a compositional bias: polar residues. The tract at residues 92–114 (QKISGTSVSKEMQRESGKSPSME) is disordered. Ser-158 is subject to Phosphoserine. Residues 197-208 (SHHGNQSHQNHN) show a composition bias toward low complexity. Residues 197–305 (SHHGNQSHQN…VNRRNQIYDS (109 aa)) are disordered. Composition is skewed to polar residues over residues 209–221 (TYPC…SRSV) and 231–244 (LSHQ…SHQN). The span at 247–293 (GHPSQQGHSSHSNQQGHLGLSSQQGHPSQSSHQSHQGQPGHPNHQSH) shows a compositional bias: low complexity. Positions 294 to 305 (SLVNRRNQIYDS) are enriched in polar residues.

This is an uncharacterized protein from Rattus norvegicus (Rat).